The chain runs to 285 residues: Transcription initiation factor IIE subunit beta (285 aa).

2 stretches are compositionally biased toward polar residues: residues 1–10 (MSSLSDQLSS) and 33–44 (TPTAYLNSNDGH). The disordered stretch occupies residues 1 to 56 (MSSLSDQLSSFKKKVANQPIYAKPQPRQPASPTPTAYLNSNDGHSSAASSPGSYSL). Residues 45 to 55 (SSAASSPGSYS) show a composition bias toward low complexity. The TFIIE beta DNA-binding region spans 67-142 (YSQPADSGVG…FTFKPLHNIR (76 aa)). The tract at residues 240–272 (PTSVDPSTVKRAGHNQTPKQKKPKTRRGKITNT) is disordered. A compositionally biased stretch (basic residues) spans 258 to 268 (KQKKPKTRRGK).

This sequence belongs to the TFIIE beta subunit family. As to quaternary structure, TFIIE is a tetramer of two alpha (tfa1) and two beta (tfa2) subunits. TFIIE associates with RNA polymerase II via the beta subunit.

Its subcellular location is the nucleus. Recruits TFIIH to the initiation complex and stimulates the RNA polymerase II C-terminal domain kinase and DNA-dependent ATPase activities of TFIIH. Both TFIIH and TFIIE are required for promoter clearance by RNA polymerase. The protein is Transcription initiation factor IIE subunit beta (tfa2) of Schizosaccharomyces pombe (strain 972 / ATCC 24843) (Fission yeast).